The following is a 230-amino-acid chain: Inactive 2-(S)-hydroxypropyl-CoM dehydrogenase 2 (230 aa).

Belongs to the short-chain dehydrogenases/reductases (SDR) family.

This chain is Inactive 2-(S)-hydroxypropyl-CoM dehydrogenase 2, found in Xanthobacter autotrophicus (strain ATCC BAA-1158 / Py2).